A 337-amino-acid chain; its full sequence is Holliday junction branch migration complex subunit RuvB (337 aa).

A large ATPase domain (RuvB-L) region spans residues 1–179 (MTHQVAVLHQ…FAFSARLSYY (179 aa)). ATP is bound by residues L18, R19, G60, K63, T64, S65, 126 to 128 (EDF), R169, Y179, and R216. T64 is a binding site for Mg(2+). Positions 180–250 (SDQDLKEILV…VAEKALAMLL (71 aa)) are small ATPAse domain (RuvB-S). Residues 253–337 (DWGLNEIDIK…KNLLSLGEGQ (85 aa)) form a head domain (RuvB-H) region. Residues K308 and R313 each coordinate DNA.

It belongs to the RuvB family. In terms of assembly, homohexamer. Forms an RuvA(8)-RuvB(12)-Holliday junction (HJ) complex. HJ DNA is sandwiched between 2 RuvA tetramers; dsDNA enters through RuvA and exits via RuvB. An RuvB hexamer assembles on each DNA strand where it exits the tetramer. Each RuvB hexamer is contacted by two RuvA subunits (via domain III) on 2 adjacent RuvB subunits; this complex drives branch migration. In the full resolvosome a probable DNA-RuvA(4)-RuvB(12)-RuvC(2) complex forms which resolves the HJ.

The protein localises to the cytoplasm. It carries out the reaction ATP + H2O = ADP + phosphate + H(+). In terms of biological role, the RuvA-RuvB-RuvC complex processes Holliday junction (HJ) DNA during genetic recombination and DNA repair, while the RuvA-RuvB complex plays an important role in the rescue of blocked DNA replication forks via replication fork reversal (RFR). RuvA specifically binds to HJ cruciform DNA, conferring on it an open structure. The RuvB hexamer acts as an ATP-dependent pump, pulling dsDNA into and through the RuvAB complex. RuvB forms 2 homohexamers on either side of HJ DNA bound by 1 or 2 RuvA tetramers; 4 subunits per hexamer contact DNA at a time. Coordinated motions by a converter formed by DNA-disengaged RuvB subunits stimulates ATP hydrolysis and nucleotide exchange. Immobilization of the converter enables RuvB to convert the ATP-contained energy into a lever motion, pulling 2 nucleotides of DNA out of the RuvA tetramer per ATP hydrolyzed, thus driving DNA branch migration. The RuvB motors rotate together with the DNA substrate, which together with the progressing nucleotide cycle form the mechanistic basis for DNA recombination by continuous HJ branch migration. Branch migration allows RuvC to scan DNA until it finds its consensus sequence, where it cleaves and resolves cruciform DNA. The chain is Holliday junction branch migration complex subunit RuvB from Chlamydia pneumoniae (Chlamydophila pneumoniae).